We begin with the raw amino-acid sequence, 204 residues long: Holliday junction resolvase RecU (204 aa).

Residues 1 to 24 are disordered; that stretch reads MTIHYPNGQQPVQHYNTHNELPTP. The segment covering 7-24 has biased composition (polar residues); the sequence is NGQQPVQHYNTHNELPTP. Residues threonine 87, aspartate 89, aspartate 102, and glutamine 121 each contribute to the Mg(2+) site.

The protein belongs to the RecU family. Mg(2+) is required as a cofactor.

It is found in the cytoplasm. The enzyme catalyses Endonucleolytic cleavage at a junction such as a reciprocal single-stranded crossover between two homologous DNA duplexes (Holliday junction).. Its function is as follows. Endonuclease that resolves Holliday junction intermediates in genetic recombination. Cleaves mobile four-strand junctions by introducing symmetrical nicks in paired strands. Promotes annealing of linear ssDNA with homologous dsDNA. Required for DNA repair, homologous recombination and chromosome segregation. The sequence is that of Holliday junction resolvase RecU from Limosilactobacillus reuteri (strain DSM 20016) (Lactobacillus reuteri).